The following is a 574-amino-acid chain: Galactose transporter (574 aa).

Residues 1–57 are disordered; sequence MAVEENNMPVVSQQPQAGEDVISSLSKDSHLSAQSQKYSNDELKAGESGSEGSQSVP. Topologically, residues 1-70 are cytoplasmic; that stretch reads MAVEENNMPV…PKKPMSEYVT (70 aa). A compositionally biased stretch (polar residues) spans 23–38; the sequence is SSLSKDSHLSAQSQKY. Phosphoserine occurs at positions 32, 35, 39, 48, 50, 53, and 55. Residues 71–91 traverse the membrane as a helical segment; it reads VSLLCLCVAFGGFMFGWDTGT. The Extracellular portion of the chain corresponds to 92–121; sequence ISGFVVQTDFLRRFGMKHKDGTHYLSNVRT. Residues 122–142 form a helical membrane-spanning segment; that stretch reads GLIVAIFNIGCAFGGIILSKG. Residues 143-149 lie on the Cytoplasmic side of the membrane; it reads GDMYGRK. Residues 150–170 traverse the membrane as a helical segment; the sequence is KGLSIVVSVYIVGIIIQIASI. The Extracellular portion of the chain corresponds to 171 to 175; that stretch reads NKWYQ. A helical transmembrane segment spans residues 176–196; that stretch reads YFIGRIISGLGVGGIAVLCPM. The Cytoplasmic segment spans residues 197–207; that stretch reads LISEIAPKHLR. Residues 208–228 traverse the membrane as a helical segment; it reads GTLVSCYQLMITAGIFLGYCT. At 229 to 242 the chain is on the extracellular side; the sequence is NYGTKSYSNSVQWR. Residues 243–263 traverse the membrane as a helical segment; that stretch reads VPLGLCFAWSLFMIGALTLVP. At 264 to 342 the chain is on the cytoplasmic side; sequence ESPRYLCEVN…MGVFVQMFQQ (79 aa). A helical membrane pass occupies residues 343 to 362; that stretch reads LTGNNYFFYYGTVIFKSVGL. At 363-366 the chain is on the extracellular side; sequence DDSF. A helical membrane pass occupies residues 367 to 387; that stretch reads ETSIVIGVVNFASTFFSLWTV. The Cytoplasmic portion of the chain corresponds to 388–394; that stretch reads ENLGHRK. The helical transmembrane segment at 395–415 threads the bilayer; sequence CLLLGAATMMACMVIYASVGV. Residues 416 to 435 lie on the Extracellular side of the membrane; that stretch reads TRLYPHGKSQPSSKGAGNCM. Residues 436–456 form a helical membrane-spanning segment; sequence IVFTCFYIFCYATTWAPVAWV. At 457–472 the chain is on the cytoplasmic side; it reads ITAESFPLRVKSKCMA. The chain crosses the membrane as a helical span at residues 473–493; sequence LASASNWVWGFLIAFFTPFIT. The Extracellular portion of the chain corresponds to 494–499; that stretch reads SAINFY. Residues 500-520 traverse the membrane as a helical segment; the sequence is YGYVFMGCLVAMFFYVFFFVP. Over 521 to 574 the chain is Cytoplasmic; that stretch reads ETKGLSLEEIQELWEEGVLPWKSEGWIPSSRRGNNYDLEDLQHDDKPWYKAMLE.

Belongs to the major facilitator superfamily. Sugar transporter (TC 2.A.1.1) family.

It localises to the membrane. In terms of biological role, GAL2 is a facilitated diffusion transporter required for both the high-affinity galactokinase-dependent and low-affinity galactokinase-independent galactose transport processes. This is Galactose transporter (GAL2) from Saccharomyces cerevisiae (strain ATCC 204508 / S288c) (Baker's yeast).